Here is an 865-residue protein sequence, read N- to C-terminus: Armadillo repeat-containing protein 2 (865 aa).

2 disordered regions span residues 39–75 and 214–243; these read TVRT…FSVH and SVPF…DQSR. Residues 60 to 75 show a composition bias toward polar residues; it reads SSRTPENRPPSSFSVH. ARM repeat units follow at residues 261–300, 303–343, 362–402, 407–448, 461–502, 505–546, 550–587, 589–614, 617–660, 662–703, 705–744, and 746–788; these read IEVD…HALE, NMLG…ALKV, EKND…TIKF, PEFL…HLLV, PLAR…KLTS, DCCV…NLTA, QARE…GEGD, RPEA…NLAI, GVGP…NLSY, KVKN…NLSQ, HDIC…NLTV, and RDKR…NFSE.

Its function is as follows. Required for sperm flagellum axoneme organization and function. Involved in axonemal central pair complex assembly and/or stability. This is Armadillo repeat-containing protein 2 from Bos taurus (Bovine).